Here is a 111-residue protein sequence, read N- to C-terminus: Nucleoid-associated protein LBA0378 (111 aa).

Belongs to the YbaB/EbfC family. Homodimer.

It localises to the cytoplasm. Its subcellular location is the nucleoid. In terms of biological role, binds to DNA and alters its conformation. May be involved in regulation of gene expression, nucleoid organization and DNA protection. This chain is Nucleoid-associated protein LBA0378, found in Lactobacillus acidophilus (strain ATCC 700396 / NCK56 / N2 / NCFM).